The following is a 190-amino-acid chain: Large ribosomal subunit protein eL19 (190 aa).

Disordered regions lie at residues 56-85 and 166-190; these read TVHS…KGTK and NRAA…EAAN. Positions 72–83 are enriched in basic residues; the sequence is AGRHMGYGKRKG. The segment covering 166–184 has biased composition (basic and acidic residues); that stretch reads NRAARERRQQRLAEKKEAL.

Belongs to the eukaryotic ribosomal protein eL19 family. In terms of assembly, component of the large ribosomal subunit. Mature ribosomes consist of a small (40S) and a large (60S) subunit. The 40S subunit contains about 32 different proteins and 1 molecule of RNA (18S). The 60S subunit contains 45 different proteins and 3 molecules of RNA (25S, 5.8S and 5S).

It is found in the cytoplasm. Component of the ribosome, a large ribonucleoprotein complex responsible for the synthesis of proteins in the cell. The small ribosomal subunit (SSU) binds messenger RNAs (mRNAs) and translates the encoded message by selecting cognate aminoacyl-transfer RNA (tRNA) molecules. The large subunit (LSU) contains the ribosomal catalytic site termed the peptidyl transferase center (PTC), which catalyzes the formation of peptide bonds, thereby polymerizing the amino acids delivered by tRNAs into a polypeptide chain. The nascent polypeptides leave the ribosome through a tunnel in the LSU and interact with protein factors that function in enzymatic processing, targeting, and the membrane insertion of nascent chains at the exit of the ribosomal tunnel. RPL19A may play a role in the last stages of translation initiation, in particular subunit joining and shedding/releasing factors. The sequence is that of Large ribosomal subunit protein eL19 from Candida albicans (strain SC5314 / ATCC MYA-2876) (Yeast).